Reading from the N-terminus, the 595-residue chain is Protein kinase C iota type (595 aa).

Polar residues predominate over residues 1 to 12 (MPTQRDSSTMSH). Positions 1 to 21 (MPTQRDSSTMSHTVACGGGGD) are disordered. Proline 2 carries the post-translational modification N-acetylproline. A required for interaction with RAB2 region spans residues 2–28 (PTQRDSSTMSHTVACGGGGDHSHQVRV). A regulatory domain region spans residues 2-252 (PTQRDSSTMS…KASSSLGLQD (251 aa)). Phosphothreonine is present on threonine 3. Serine 7 and serine 8 each carry phosphoserine. The residue at position 9 (threonine 9) is a Phosphothreonine. The region spanning 25–108 (QVRVKAYYRG…SELLIHVFPC (84 aa)) is the PB1 domain. An interaction with PARD6A region spans residues 72 to 91 (DEEGDPCTVSSQLELEEAFR). Positions 125–134 (YRRGARRWRK) match the Pseudosubstrate motif. The segment at 140–190 (GHTFQAKRFNRRAHCAICTDRIWGLGRQGYKCINCKLLVHKKCHKLVTIEC) adopts a Phorbol-ester/DAG-type zinc-finger fold. Positions 253 to 521 (FDLLRVIGRG…FADIQGHPFF (269 aa)) constitute a Protein kinase domain. 259–267 (IGRGSYAKV) is an ATP binding site. Phosphotyrosine; by SRC occurs at positions 264 and 279. Residue lysine 282 coordinates ATP. The residue at position 333 (tyrosine 333) is a Phosphotyrosine; by SRC. Residue aspartate 377 is the Proton acceptor of the active site. Residues threonine 411 and threonine 563 each carry the phosphothreonine modification. The AGC-kinase C-terminal domain maps to 522–593 (RNVDWDMMEQ…INPLLMSAEE (72 aa)).

It belongs to the protein kinase superfamily. AGC Ser/Thr protein kinase family. PKC subfamily. As to quaternary structure, forms a complex with SQSTM1 and MP2K5. Interacts directly with SQSTM1. Interacts with IKBKB. Interacts with PARD6A, PARD6B and PARD6G. Part of a quaternary complex containing aPKC, PARD3, a PARD6 protein (PARD6A, PARD6B or PARD6G) and a GTPase protein (CDC42 or RAC1). Part of a complex with LLGL1 and PARD6B. Interacts with ADAP1/CENTA1. Interaction with SMG1, through the ZN-finger domain, activates the kinase activity. Interacts with CDK7. Forms a complex with RAB2A and GAPDH involved in recruitment onto the membrane of vesicular tubular clusters (VTCs). Interacts with ECT2 ('Thr-359' phosphorylated form). Interacts with VAMP2. Interacts with WDFY2 (via WD repeats 1-3). In terms of processing, phosphorylation at Thr-411 in the activation loop is not mandatory for activation. Upon neuronal growth factor (NGF) stimulation, phosphorylated by SRC at Tyr-264, Tyr-279 and Tyr-333. Phosphorylation on Tyr-264 facilitates binding to KPNB1/importin-beta regulating entry of PRKCI into the nucleus. Phosphorylation on Tyr-333 is important for NF-kappa-B stimulation. Phosphorylated at Thr-563 during the initial phase of long term potentiation.

The protein localises to the cytoplasm. It is found in the membrane. It localises to the endosome. The protein resides in the nucleus. The enzyme catalyses L-seryl-[protein] + ATP = O-phospho-L-seryl-[protein] + ADP + H(+). It carries out the reaction L-threonyl-[protein] + ATP = O-phospho-L-threonyl-[protein] + ADP + H(+). Atypical PKCs (PRKCI and PRKCZ) exhibit an elevated basal enzymatic activity (that may be due to the interaction with SMG1 or SQSTM1) and are not regulated by diacylglycerol, phosphatidylserine, phorbol esters or calcium ions. Two specific sites, Thr-411 (activation loop of the kinase domain) and Thr-563 (turn motif), need to be phosphorylated for its full activation. Might also be a target for novel lipid activators that are elevated during nutrient-stimulated insulin secretion. Its function is as follows. Calcium- and diacylglycerol-independent serine/ threonine-protein kinase that plays a general protective role against apoptotic stimuli, is involved in NF-kappa-B activation, cell survival, differentiation and polarity, and contributes to the regulation of microtubule dynamics in the early secretory pathway. Is necessary for BCR-ABL oncogene-mediated resistance to apoptotic drug in leukemia cells, protecting leukemia cells against drug-induced apoptosis. In cultured neurons, prevents amyloid beta protein-induced apoptosis by interrupting cell death process at a very early step. In glioblastoma cells, may function downstream of phosphatidylinositol 3-kinase (PI3K) and PDPK1 in the promotion of cell survival by phosphorylating and inhibiting the pro-apoptotic factor BAD. Can form a protein complex in non-small cell lung cancer (NSCLC) cells with PARD6A and ECT2 and regulate ECT2 oncogenic activity by phosphorylation, which in turn promotes transformed growth and invasion. In response to nerve growth factor (NGF), acts downstream of SRC to phosphorylate and activate IRAK1, allowing the subsequent activation of NF-kappa-B and neuronal cell survival. Functions in the organization of the apical domain in epithelial cells by phosphorylating EZR. This step is crucial for activation and normal distribution of EZR at the early stages of intestinal epithelial cell differentiation. Forms a protein complex with LLGL1 and PARD6B independently of PARD3 to regulate epithelial cell polarity. Plays a role in microtubule dynamics in the early secretory pathway through interaction with RAB2A and GAPDH and recruitment to vesicular tubular clusters (VTCs). In human coronary artery endothelial cells (HCAEC), is activated by saturated fatty acids and mediates lipid-induced apoptosis. Downstream of PI3K is required for insulin-stimulated glucose transport. Activates RAB4A and promotes its association with KIF3A which is required for the insulin-induced SLC2A4/GLUT4 translocation in adipocytes. Is essential in early embryogenesis and development of differentiating photoreceptors by playing a role in the establishment of epithelial and neuronal polarity. Involved in early synaptic long term potentiation phase in CA1 hippocampal cells and short term memory formation. The protein is Protein kinase C iota type (Prkci) of Mus musculus (Mouse).